A 1228-amino-acid chain; its full sequence is Probable phospholipid-transporting ATPase 5 (1228 aa).

Residues 1–74 (MARGRIRSKL…TTRYNLITFF (74 aa)) are Cytoplasmic-facing. A helical membrane pass occupies residues 75 to 96 (PKSLYEQFHRAANLYFLVAAIL). Over 97–100 (SVFP) the chain is Extracellular. A helical transmembrane segment spans residues 101-123 (LSPFNKWSMIAPLVFVVGLSMLK). Residues 124 to 305 (EALEDWRRFM…SRIERTMDYI (182 aa)) are Cytoplasmic-facing. Residues 306–327 (IYTLLVLLILISCISSSGFAWE) form a helical membrane-spanning segment. The Extracellular portion of the chain corresponds to 328 to 359 (TEFHMPKMWYLRPGEPIDFTNPINPIYAGVVH). Residues 360 to 377 (LITALLLYGYLIPISLYV) traverse the membrane as a helical segment. Topologically, residues 378-934 (SIEVVKVWQA…HGHWCYKRIA (557 aa)) are cytoplasmic. Residue Asp425 is the 4-aspartylphosphate intermediate of the active site. A Glycyl lysine isopeptide (Lys-Gly) (interchain with G-Cter in ubiquitin) cross-link involves residue Lys616. Residues Asp879 and Asp883 each contribute to the Mg(2+) site. The helical transmembrane segment at 935–954 (QMICYFFYKNIAFGLTLFYF) threads the bilayer. Residues 955-968 (EAFTGFSGQSVYND) lie on the Extracellular side of the membrane. A helical membrane pass occupies residues 969–988 (YYLLLFNVVLTSLPVIALGV). The Cytoplasmic portion of the chain corresponds to 989–1018 (FEQDVSSEICLQFPALYQQGTKNLFFDWSR). The helical transmembrane segment at 1019-1041 (ILGWMCNGVYASLVIFFLNIGII) threads the bilayer. Over 1042–1054 (YSQAFRDNGQTAD) the chain is Extracellular. The helical transmembrane segment at 1055–1077 (MDAVGTTMFTCIIWAANVQIALT) threads the bilayer. The Cytoplasmic segment spans residues 1078-1083 (MSHFTW). A helical transmembrane segment spans residues 1084 to 1104 (IQHVLIWGSIGMWYLFVAIYS). At 1105–1117 (MMPPSYSGNIYRI) the chain is on the extracellular side. Residues 1118-1146 (LDEILAPAPIYWMATLLVTVAAVLPYVAH) form a helical membrane-spanning segment. The Cytoplasmic segment spans residues 1147-1228 (IAFQRFLNPL…AQDAMSPRSL (82 aa)).

Belongs to the cation transport ATPase (P-type) (TC 3.A.3) family. Type IV subfamily.

The protein localises to the membrane. It carries out the reaction ATP + H2O + phospholipidSide 1 = ADP + phosphate + phospholipidSide 2.. Its function is as follows. Involved in transport of phospholipids. The polypeptide is Probable phospholipid-transporting ATPase 5 (Arabidopsis thaliana (Mouse-ear cress)).